A 97-amino-acid chain; its full sequence is Co-chaperonin GroES (97 aa).

This sequence belongs to the GroES chaperonin family. As to quaternary structure, heptamer of 7 subunits arranged in a ring. Interacts with the chaperonin GroEL.

It is found in the cytoplasm. In terms of biological role, together with the chaperonin GroEL, plays an essential role in assisting protein folding. The GroEL-GroES system forms a nano-cage that allows encapsulation of the non-native substrate proteins and provides a physical environment optimized to promote and accelerate protein folding. GroES binds to the apical surface of the GroEL ring, thereby capping the opening of the GroEL channel. The sequence is that of Co-chaperonin GroES from Buchnera aphidicola subsp. Pterocomma populeum.